The following is a 238-amino-acid chain: Ribonuclease PH (238 aa).

Phosphate contacts are provided by residues R86 and 124-126 (GTR).

This sequence belongs to the RNase PH family. As to quaternary structure, homohexameric ring arranged as a trimer of dimers.

The enzyme catalyses tRNA(n+1) + phosphate = tRNA(n) + a ribonucleoside 5'-diphosphate. In terms of biological role, phosphorolytic 3'-5' exoribonuclease that plays an important role in tRNA 3'-end maturation. Removes nucleotide residues following the 3'-CCA terminus of tRNAs; can also add nucleotides to the ends of RNA molecules by using nucleoside diphosphates as substrates, but this may not be physiologically important. Probably plays a role in initiation of 16S rRNA degradation (leading to ribosome degradation) during starvation. This chain is Ribonuclease PH, found in Parvibaculum lavamentivorans (strain DS-1 / DSM 13023 / NCIMB 13966).